The sequence spans 729 residues: Fatty acid oxidation complex subunit alpha (729 aa).

Positions 1–189 are enoyl-CoA hydratase/isomerase; the sequence is MLYKGDTLYL…KIGLVDGVVK (189 aa). Asp-296 is a substrate binding site. Positions 311–729 are 3-hydroxyacyl-CoA dehydrogenase; sequence ETPKQAAVLG…ARPVGDLKTA (419 aa). Residues Met-324, Asp-343, 400-402, Lys-407, and Ser-429 contribute to the NAD(+) site; that span reads VVE. His-450 acts as the For 3-hydroxyacyl-CoA dehydrogenase activity in catalysis. Asn-453 provides a ligand contact to NAD(+). Substrate is bound by residues Asn-500 and Tyr-660. The disordered stretch occupies residues 708 to 729; the sequence is RHNEPYYPPVEPARPVGDLKTA.

In the N-terminal section; belongs to the enoyl-CoA hydratase/isomerase family. This sequence in the C-terminal section; belongs to the 3-hydroxyacyl-CoA dehydrogenase family. As to quaternary structure, heterotetramer of two alpha chains (FadB) and two beta chains (FadA).

The catalysed reaction is a (3S)-3-hydroxyacyl-CoA + NAD(+) = a 3-oxoacyl-CoA + NADH + H(+). It carries out the reaction a (3S)-3-hydroxyacyl-CoA = a (2E)-enoyl-CoA + H2O. It catalyses the reaction a 4-saturated-(3S)-3-hydroxyacyl-CoA = a (3E)-enoyl-CoA + H2O. The enzyme catalyses (3S)-3-hydroxybutanoyl-CoA = (3R)-3-hydroxybutanoyl-CoA. The catalysed reaction is a (3Z)-enoyl-CoA = a 4-saturated (2E)-enoyl-CoA. It carries out the reaction a (3E)-enoyl-CoA = a 4-saturated (2E)-enoyl-CoA. Its pathway is lipid metabolism; fatty acid beta-oxidation. Involved in the aerobic and anaerobic degradation of long-chain fatty acids via beta-oxidation cycle. Catalyzes the formation of 3-oxoacyl-CoA from enoyl-CoA via L-3-hydroxyacyl-CoA. It can also use D-3-hydroxyacyl-CoA and cis-3-enoyl-CoA as substrate. The protein is Fatty acid oxidation complex subunit alpha of Escherichia coli O81 (strain ED1a).